Here is a 109-residue protein sequence, read N- to C-terminus: Con-Ins K2 (109 aa).

The N-terminal stretch at 1–24 (MTTSSYFLLVALGLLLYVCQSSFG) is a signal peptide. A propeptide spanning residues 25–29 (NPHTR) is cleaved from the precursor. Disulfide bonds link cysteine 41–cysteine 90, cysteine 53–cysteine 103, and cysteine 89–cysteine 94. 4-carboxyglutamate is present on glutamate 44. Residues 57 to 83 (RKRRGFPSMLKARAKRNEAFLLQRDGR) constitute a propeptide, c peptide.

It belongs to the insulin family. As to quaternary structure, heterodimer of A and B chains; disulfide-linked. In terms of tissue distribution, expressed by the venom gland.

Its subcellular location is the secreted. This venom insulin, from a fish-hunting cone snail, facilitates prey capture by rapidly inducing hypoglycemic shock. It is one of the smallest known insulin found in nature and lacks the C-terminal segment of the B chain that, in human insulin, mediates engagement of the insulin receptor (INSR) and assembly of the hormone's hexameric storage form. Despite lacking this segment, it both binds and activates human insulin receptor (long isoform (HIR-B)) with a moderate potency (EC(50)=373.2 nM). In vivo, intraperitoneal injection of this peptide into zebrafish lowers blood glucose with a lower potency than human insulin. In addition, when applied to water, this peptide reduces overall locomotor activity of zebrafish larvae, observed as a significant decrease in the percentage of time spent swimming and movement frequency. When tested on a mouse model of diabetes, this insulin also lowers blood glucose with a 20-fold lower potency than human insulin. This is Con-Ins K2 from Conus kinoshitai (Kinoshita's cone).